Reading from the N-terminus, the 1185-residue chain is Pyruvate carboxylase (1185 aa).

A Biotin carboxylation domain is found at Lys-32–Glu-484. Positions 150, 234, and 269 each coordinate ATP. The ATP-grasp domain occupies Arg-154–Ala-351. The active site involves Arg-326. The 269-residue stretch at Gly-570 to Arg-838 folds into the Pyruvate carboxyltransferase domain. Residues Arg-578 to Gln-582 and Arg-651 each bind substrate. An a divalent metal cation-binding site is contributed by Asp-579. A divalent metal cation-binding residues include Lys-747, His-777, and His-779. An N6-carboxylysine modification is found at Lys-747. Substrate is bound at residue Thr-912. A Biotinyl-binding domain is found at Arg-1108–Glu-1183. Lys-1149 is subject to N6-biotinyllysine.

Biotin is required as a cofactor. It depends on Zn(2+) as a cofactor.

The protein localises to the cytoplasm. The enzyme catalyses hydrogencarbonate + pyruvate + ATP = oxaloacetate + ADP + phosphate + H(+). The protein operates within carbohydrate biosynthesis; gluconeogenesis. In terms of biological role, pyruvate carboxylase catalyzes a 2-step reaction, involving the ATP-dependent carboxylation of the covalently attached biotin in the first step and the transfer of the carboxyl group to pyruvate in the second. The chain is Pyruvate carboxylase (pyr1) from Schizosaccharomyces pombe (strain 972 / ATCC 24843) (Fission yeast).